The sequence spans 233 residues: Lysoplasmalogenase TMEM86B (233 aa).

Topologically, residues 1–30 are cytoplasmic; it reads MPCCDPYPWIGLNVGRLSSFPLLKYPQVRR. A helical transmembrane segment spans residues 31–47; that stretch reads WLAPFIVACSLYFLLWI. Residues 48 to 53 lie on the Extracellular side of the membrane; sequence PEDQPS. The helical transmembrane segment at 54 to 75 threads the bilayer; sequence WVSALVKCQPILCLVLFLWAVA. The Cytoplasmic segment spans residues 76-81; sequence PGGSYT. Residues 82 to 100 form a helical membrane-spanning segment; it reads WLLQGALTCSAVGDACLIW. The Extracellular segment spans residues 101 to 106; it reads PEAFFY. A helical transmembrane segment spans residues 107 to 124; that stretch reads GMAVFSVAHLLYLWAFGL. Residues 125–130 lie on the Cytoplasmic side of the membrane; sequence SPLQPG. The chain crosses the membrane as a helical span at residues 131-147; that stretch reads LLLCTTLASLTYYSFLL. Topologically, residues 148 to 153 are extracellular; the sequence is LHLEPN. The helical transmembrane segment at 154–170 threads the bilayer; it reads MVLPVAAYGLILNTMLW. Residues 171-178 lie on the Cytoplasmic side of the membrane; it reads RGLVLGRS. Residues 179–195 form a helical membrane-spanning segment; the sequence is AGWGAVLFIFSDGVLAW. The Extracellular segment spans residues 196-206; it reads DTFVYTLPFAR. A helical membrane pass occupies residues 207 to 225; the sequence is LVTMSTYYAAQLLLTLSAL. At 226–233 the chain is on the cytoplasmic side; it reads RSPGLKTH.

The protein belongs to the TMEM86 family. In terms of assembly, homodimer.

The protein localises to the endoplasmic reticulum membrane. The protein resides in the cytoplasm. The enzyme catalyses a 1-O-(1Z-alkenyl)-sn-glycero-3-phosphocholine + H2O = a 2,3-saturated aldehyde + sn-glycerol 3-phosphocholine. It catalyses the reaction a 1-O-(1Z-alkenyl)-sn-glycero-3-phosphoethanolamine + H2O = a 2,3-saturated aldehyde + sn-glycero-3-phosphoethanolamine. Competitively inhibited by lysophosphatidic acid. In terms of biological role, catalyzes the hydrolysis of the vinyl ether bond of choline or ethanolamine lysoplasmalogens, forming fatty aldehyde and glycerophosphocholine or glycerophosphoethanolamine, respectively and is specific for the sn-2-deacylated (lyso) form of plasmalogen. The polypeptide is Lysoplasmalogenase TMEM86B (Tmem86b) (Rattus norvegicus (Rat)).